The following is a 612-amino-acid chain: Dihydroxy-acid dehydratase (612 aa).

A Mg(2+)-binding site is contributed by Asp81. Cys122 serves as a coordination point for [2Fe-2S] cluster. Positions 123 and 124 each coordinate Mg(2+). Lys124 carries the post-translational modification N6-carboxylysine. Cys193 contacts [2Fe-2S] cluster. Glu489 serves as a coordination point for Mg(2+). The active-site Proton acceptor is the Ser515.

The protein belongs to the IlvD/Edd family. Homodimer. [2Fe-2S] cluster is required as a cofactor. Mg(2+) serves as cofactor.

It catalyses the reaction (2R)-2,3-dihydroxy-3-methylbutanoate = 3-methyl-2-oxobutanoate + H2O. It carries out the reaction (2R,3R)-2,3-dihydroxy-3-methylpentanoate = (S)-3-methyl-2-oxopentanoate + H2O. Its pathway is amino-acid biosynthesis; L-isoleucine biosynthesis; L-isoleucine from 2-oxobutanoate: step 3/4. The protein operates within amino-acid biosynthesis; L-valine biosynthesis; L-valine from pyruvate: step 3/4. Functions in the biosynthesis of branched-chain amino acids. Catalyzes the dehydration of (2R,3R)-2,3-dihydroxy-3-methylpentanoate (2,3-dihydroxy-3-methylvalerate) into 2-oxo-3-methylpentanoate (2-oxo-3-methylvalerate) and of (2R)-2,3-dihydroxy-3-methylbutanoate (2,3-dihydroxyisovalerate) into 2-oxo-3-methylbutanoate (2-oxoisovalerate), the penultimate precursor to L-isoleucine and L-valine, respectively. In Pseudomonas aeruginosa (strain LESB58), this protein is Dihydroxy-acid dehydratase.